The following is a 176-amino-acid chain: Large ribosomal subunit protein bL17m (176 aa).

A mitochondrion-targeting transit peptide spans Met-1–Ala-8.

It belongs to the bacterial ribosomal protein bL17 family. Component of the mitochondrial ribosome large subunit (39S) which comprises a 16S rRNA and about 50 distinct proteins.

The protein resides in the mitochondrion. The polypeptide is Large ribosomal subunit protein bL17m (Mrpl17) (Mus musculus (Mouse)).